The chain runs to 426 residues: Protein EARLY STARVATION 1, chloroplastic (426 aa).

A chloroplast-targeting transit peptide spans 1–58 (MSEMAASSAISLLDIKLRRFGVGASNHELRLTKWFKGDQAGAPTRRFTCFADMLAPIR). Disordered regions lie at residues 106–127 (CTPR…TGIA) and 396–426 (QPRE…DQPQ). The segment covering 118-127 (TPPKRDTGIA) has biased composition (basic and acidic residues). Residues 412–426 (PSPPPEPDLPPDQPQ) show a composition bias toward pro residues.

Belongs to the ESV1 family.

It localises to the plastid. It is found in the chloroplast stroma. The protein resides in the plastid stroma. Binds preferentially to highly ordered alpha-glucans, such as starch and crystalline maltodextrins. Involved in the organization of the starch granule matrix, thus influencing starch turnover by modulating the accessibility of starch polymers to modifying and degrading enzymes involved in phosphorylation, hydrolyzes and synthesis, including starch synthases (SSI and SSIII), starch phosphorylases (PHS1), isoamylase, beta-amylase, glucan water dikinase (GWD) and phosphoglucan water dikinase (PWD). Prevents GWD- and PWD-mediated starch phosphorylation, and subsequent degradation. Required for the control of starch degradation in leaves and starch distribution in nonphotosynthetic parts (e.g. cells immediately adjacent to veins, columella cells of root caps, stems, flowers and siliques) by limiting the hasty depletion of starch reserves during the night. Promotes gravitropic responses, negative in shoots but positive in roots, by maintaining starch granules (statoliths) accumulation in hypocotyls and roots columella, especially in dark conditions and in the endodermis, where starch is formed from transported glucose-6-phosphates. This Arabidopsis thaliana (Mouse-ear cress) protein is Protein EARLY STARVATION 1, chloroplastic.